We begin with the raw amino-acid sequence, 168 residues long: uncharacterized protein (168 aa).

The region spanning 19 to 80 is the HTH asnC-type domain; sequence LDKLDRHILN…VVSPKAVGRT (62 aa). The H-T-H motif DNA-binding region spans 38–57; it reads LKELSEKVNSSVATCQRRVQ.

This is an uncharacterized protein from Haemophilus influenzae (strain ATCC 51907 / DSM 11121 / KW20 / Rd).